Reading from the N-terminus, the 729-residue chain is Hydroxamate siderophore receptor FhuE (729 aa).

The N-terminal stretch at 1-36 (MLSTQFNRDNQYQAITKPSLLAGCIALALLPSAAFA) is a signal peptide. The TonB box motif lies at 42 to 49 (ETVIVEGS). Residues 48–72 (GSATAPDDGENDYSVTSTSAGTKMQ) are disordered. The span at 60–72 (YSVTSTSAGTKMQ) shows a compositional bias: polar residues. One can recognise a TBDR plug domain in the interval 74-183 (TQRDIPQSVT…PSAAINMVRK (110 aa)). Residues Arg-117, Arg-142, Trp-275, Tyr-357, Asn-373, and Trp-416 each contribute to the Fe(III)-coprogen site. The region spanning 189-729 (EFKGDVSAEY…NFSITGTYQF (541 aa)) is the TBDR beta-barrel domain. The TonB C-terminal box signature appears at 712–729 (SIVYGTPRNFSITGTYQF).

It belongs to the TonB-dependent receptor family.

The protein resides in the cell outer membrane. Functionally, involved in the active transport across the outer membrane of iron complexed with linear hydroxamate siderophores coprogen, rhodotorulic acid and ferrioxamine B. Binds Fe-coprogen with high affinity, rhodotorulic acid to a lesser extent, and weakly to ferrioxamine B. Selective for planar siderophores. Does not use cyclic siderophores ferrichrome nor ferrioxamine E as substrates. The protein is Hydroxamate siderophore receptor FhuE of Escherichia coli (strain K12).